The following is a 454-amino-acid chain: Oxygen-dependent coproporphyrinogen-III oxidase, mitochondrial (454 aa).

The transit peptide at 1–110 (MALQLGRLSS…MLPKTSGTRA (110 aa)) directs the protein to the mitochondrion. The segment at 43–70 (AAGRVCRPPGPAGTEQSRGLGHGSTSRG) is disordered. Serine 112 bears the Phosphoserine mark. Positions 193 to 202 (VLQDGCVFEK) are important for dimerization. Serine 244 lines the coproporphyrinogen III pocket. Histidine 258 serves as the catalytic Proton donor. 260–262 (NYR) provides a ligand contact to coproporphyrinogen III. Positions 392–428 (YVEFNLLYDRGTKFGLFTPGSRIESILMSLPLTARWE) are important for dimerization. Lysine 404 carries the post-translational modification N6-acetyllysine; alternate. Lysine 404 is subject to N6-succinyllysine; alternate. 411–413 (GSR) contributes to the coproporphyrinogen III binding site.

This sequence belongs to the aerobic coproporphyrinogen-III oxidase family. Homodimer.

The protein localises to the mitochondrion intermembrane space. The enzyme catalyses coproporphyrinogen III + O2 + 2 H(+) = protoporphyrinogen IX + 2 CO2 + 2 H2O. The protein operates within porphyrin-containing compound metabolism; protoporphyrin-IX biosynthesis; protoporphyrinogen-IX from coproporphyrinogen-III (O2 route): step 1/1. Its function is as follows. Catalyzes the aerobic oxidative decarboxylation of propionate groups of rings A and B of coproporphyrinogen-III to yield the vinyl groups in protoporphyrinogen-IX and participates to the sixth step in the heme biosynthetic pathway. The polypeptide is Oxygen-dependent coproporphyrinogen-III oxidase, mitochondrial (Homo sapiens (Human)).